Consider the following 489-residue polypeptide: MSQLVQFIDGQWLAGAGKPFESKDPAKNQVIWQGEAASAAQVEAAVKAARHAFYHWSDLALDYRLAIVRRYADLLGEHKEALALTIARETGKPLWETRTEVAAMQGKIAISIRAHDERTGTVENPMPGAKAFVRHKPHGVVAVFGPYNFPGHLPNGHIVPALIAGNTVVFKPSELTPMVAEAMLKIWQEAGLPKGVLNLVQGEVDTGKALAGNPDIDGLFFTGSSRTGHFLHQQFAGQPGKILALEMGGNNPLIVKDVSDIDGAVHAIVQSAFITSGQRCTCSRRLFVERSVQGDALVKRLVEVVGQIKVGLYDAAEQPFMGAMISEKAALGMVEAQANLQRLGGESLLTLTHLEAGTGFVSPGIIDVTAVSALPDEEYFGPLLQLIRYDDFDAAIDQGNATSFGLSAGLLGDSEADWQHFFKRIRAGIVNWNKPITGASSAAPFGGIGASGNHRASAYYAADYCAYPVASVEDSKAAMPDQLSPGLTF.

Gly223 to Gly228 contributes to the NAD(+) binding site. Catalysis depends on residues Glu246 and Cys280.

It belongs to the aldehyde dehydrogenase family. AstD subfamily.

The enzyme catalyses N-succinyl-L-glutamate 5-semialdehyde + NAD(+) + H2O = N-succinyl-L-glutamate + NADH + 2 H(+). It functions in the pathway amino-acid degradation; L-arginine degradation via AST pathway; L-glutamate and succinate from L-arginine: step 4/5. Functionally, catalyzes the NAD-dependent reduction of succinylglutamate semialdehyde into succinylglutamate. This Aeromonas hydrophila subsp. hydrophila (strain ATCC 7966 / DSM 30187 / BCRC 13018 / CCUG 14551 / JCM 1027 / KCTC 2358 / NCIMB 9240 / NCTC 8049) protein is N-succinylglutamate 5-semialdehyde dehydrogenase.